The sequence spans 276 residues: Chlorophyll a-b binding protein CP29.3, chloroplastic (276 aa).

Residues 1 to 29 (MATTTAAAASGIFGIRIQDPRPGTGRVQA) constitute a chloroplast transit peptide. Residues 1–53 (MATTTAAAASGIFGIRIQDPRPGTGRVQARFGFSFGKKKPAPPPKKSRQVQDD) form a disordered region. Residues 36–48 (GKKKPAPPPKKSR) are compositionally biased toward basic residues. Tryptophan 59 is a chlorophyll b binding site. Chlorophyll a contacts are provided by phenylalanine 79, glutamate 141, and histidine 144. A helical membrane pass occupies residues 147–167 (WAMLGTLGAIAVEALTGIAWQ). Position 181 (leucine 181) interacts with chlorophyll a. A helical membrane pass occupies residues 185–205 (LPFSLTTLIWIEVLVVGYIEF). Chlorophyll b contacts are provided by glutamate 204 and arginine 207. Chlorophyll a is bound by residues glutamate 242, histidine 245, arginine 247, and glutamine 259. The helical transmembrane segment at 248–268 (LAMVAFLIFALQAAFTGKGPV) threads the bilayer.

The protein belongs to the light-harvesting chlorophyll a/b-binding (LHC) protein family. As to quaternary structure, the LHC complex consists of chlorophyll a-b binding proteins. It depends on Binds at least 14 chlorophylls (8 Chl-a and 6 Chl-b) and carotenoids such as lutein and neoxanthin. as a cofactor. In terms of processing, photoregulated by reversible phosphorylation of its threonine residues.

It localises to the plastid. It is found in the chloroplast thylakoid membrane. Functionally, the light-harvesting complex (LHC) functions as a light receptor, it captures and delivers excitation energy to photosystems with which it is closely associated. The polypeptide is Chlorophyll a-b binding protein CP29.3, chloroplastic (LHCB4.3) (Arabidopsis thaliana (Mouse-ear cress)).